A 433-amino-acid polypeptide reads, in one-letter code: MEVVDPQQLGMFTEGELMSVGMDTFIHRIDSTEVIYQPRRKRAKLIGKYLMGDLLGEGSYGKVKEVLDSETLCRRAVKILKKKKLRRIPNGEANVKKEIQLLRRLRHKNVIQLVDVLYNEEKQKMYMVMEYCVCGMQEMLDSVPEKRFPVCQAHGYFCQLIDGLEYLHSQGIVHKDIKPGNLLLTTGGTLKISDLGVAEALHPFAADDTCRTSQGSPAFQPPEIANGLDTFSGFKVDIWSAGVTLYNITTGLYPFEGDNIYKLFENIGKGSYAIPGDCGPPLSDLLKGMLEYEPAKRFSIRQIRQHSWFRKKHPPAEAPVPIPPSPDTKDRWRSMTVVPYLEDLHGADEDEDLFDIEDDIIYTQDFTVPGQVPEEEASHNGQRRGLPKAVCMNGTEAAQLSTKSRAEGRAPNPARKACSASSKIRRLSACKQQ.

Serine 31 bears the Phosphoserine mark. N6-acetyllysine occurs at positions 44 and 48. Residues 45–90 (LIGKYLMGDLLGEGSYGKVKEVLDSETLCRRAVKILKKKKLRRIPN) are sufficient for interaction with SIRT1. In terms of domain architecture, Protein kinase spans 49–309 (YLMGDLLGEG…IRQIRQHSWF (261 aa)). Residues 55 to 63 (LGEGSYGKV) and lysine 78 each bind ATP. Residues lysine 96 and lysine 97 each carry the N6-acetyllysine modification. Aspartate 176 functions as the Proton acceptor in the catalytic mechanism. Position 189 is a phosphothreonine; by autocatalysis (threonine 189). N6-acetyllysine is present on residues lysine 296 and lysine 311. Residues 312–331 (KHPPAEAPVPIPPSPDTKDR) are disordered. Pro residues predominate over residues 316 to 326 (AEAPVPIPPSP). Serine 325 is subject to Phosphoserine. Threonine 336 carries the post-translational modification Phosphothreonine; by autocatalysis. Threonine 363 is modified (phosphothreonine; by ATM and autocatalysis). Positions 397 to 433 (AAQLSTKSRAEGRAPNPARKACSASSKIRRLSACKQQ) are disordered. 2 positions are modified to phosphoserine: glutamine 399 and serine 401. Lysine 416 is subject to N6-acetyllysine. Residue cysteine 418 is the site of S-palmitoyl cysteine attachment. Residue lysine 423 is modified to N6-acetyllysine. The span at 423 to 433 (KIRRLSACKQQ) shows a compositional bias: basic residues. At serine 428 the chain carries Phosphoserine; by autocatalysis, PKA, PKC/PRKCZ and RPS6KA1. Cysteine 430 is subject to Cysteine methyl ester. A lipid anchor (S-farnesyl cysteine) is attached at cysteine 430. Residue lysine 431 is modified to N6-acetyllysine. A propeptide spans 431-433 (KQQ) (removed in mature form).

This sequence belongs to the protein kinase superfamily. CAMK Ser/Thr protein kinase family. LKB1 subfamily. As to quaternary structure, catalytic component of a trimeric complex composed of STK11/LKB1, STRAD (STRADA or STRADB) and CAB39/MO25 (CAB39/MO25alpha or CAB39L/MO25beta): the complex tethers STK11/LKB1 in the cytoplasm and stimulates its catalytic activity. Found in a ternary complex composed of SMAD4, STK11/LKB1 and STK11IP. Interacts with p53/TP53, SMAD4, STK11IP and WDR6. Interacts with NR4A1. Interacts with NISCH; this interaction may increase STK11 activity. Interacts with PTEN; leading to PTEN phosphorylation. Interacts with SIRT1; the interaction deacetylates STK11. Interacts with CDKN1A. Requires Mg(2+) as cofactor. The cofactor is Mn(2+). Phosphorylated by ATM at Thr-363 following ionizing radiation (IR). Phosphorylation at Ser-428 by RPS6KA1 and/or some PKA is required to inhibit cell growth. Phosphorylation at Ser-428 is also required during neuronal polarization to mediate phosphorylation of BRSK1 and BRSK2. Phosphorylation by PKC/PRKCZ at Ser-399 in isoform 2 promotes metformin (or peroxynitrite)-induced nuclear export of STK11 and activation of AMPK. UV radiation-induced phosphorylation at Thr-363 mediates CDKN1A degradation. Post-translationally, acetylated. Deacetylation at Lys-48 enhances cytoplasmic localization and kinase activity in vitro. As to expression, ubiquitously expressed. Strongest expression in testis and fetal liver.

The protein resides in the nucleus. Its subcellular location is the cytoplasm. It is found in the membrane. It localises to the mitochondrion. It carries out the reaction L-seryl-[protein] + ATP = O-phospho-L-seryl-[protein] + ADP + H(+). The catalysed reaction is L-threonyl-[protein] + ATP = O-phospho-L-threonyl-[protein] + ADP + H(+). With respect to regulation, activated by forming a complex with STRAD (STRADA or STRADB) and CAB39/MO25 (CAB39/MO25alpha or CAB39L/MO25beta): STRADA (or STRADB)-binding promotes a conformational change of STK11/LKB1 in an active conformation, which is stabilized by CAB39/MO25alpha (or CAB39L/MO25beta) interacting with the STK11/LKB1 activation loop. Sequestration in the nucleus by NR4A1 prevents it from phosphorylating and activating cytoplasmic AMPK. Functionally, tumor suppressor serine/threonine-protein kinase that controls the activity of AMP-activated protein kinase (AMPK) family members, thereby playing a role in various processes such as cell metabolism, cell polarity, apoptosis and DNA damage response. Acts by phosphorylating the T-loop of AMPK family proteins, thus promoting their activity: phosphorylates PRKAA1, PRKAA2, BRSK1, BRSK2, MARK1, MARK2, MARK3, MARK4, NUAK1, NUAK2, SIK1, SIK2, SIK3 and SNRK but not MELK. Also phosphorylates non-AMPK family proteins such as STRADA, PTEN and possibly p53/TP53. Acts as a key upstream regulator of AMPK by mediating phosphorylation and activation of AMPK catalytic subunits PRKAA1 and PRKAA2 and thereby regulates processes including: inhibition of signaling pathways that promote cell growth and proliferation when energy levels are low, glucose homeostasis in liver, activation of autophagy when cells undergo nutrient deprivation, and B-cell differentiation in the germinal center in response to DNA damage. Also acts as a regulator of cellular polarity by remodeling the actin cytoskeleton. Required for cortical neuron polarization by mediating phosphorylation and activation of BRSK1 and BRSK2, leading to axon initiation and specification. Involved in DNA damage response: interacts with p53/TP53 and recruited to the CDKN1A/WAF1 promoter to participate in transcription activation. Able to phosphorylate p53/TP53; the relevance of such result in vivo is however unclear and phosphorylation may be indirect and mediated by downstream STK11/LKB1 kinase NUAK1. Also acts as a mediator of p53/TP53-dependent apoptosis via interaction with p53/TP53: translocates to the mitochondrion during apoptosis and regulates p53/TP53-dependent apoptosis pathways. Regulates UV radiation-induced DNA damage response mediated by CDKN1A. In association with NUAK1, phosphorylates CDKN1A in response to UV radiation and contributes to its degradation which is necessary for optimal DNA repair. Its function is as follows. Has a role in spermiogenesis. This Homo sapiens (Human) protein is Serine/threonine-protein kinase STK11.